We begin with the raw amino-acid sequence, 426 residues long: 5-methylthioadenosine/S-adenosylhomocysteine deaminase (426 aa).

Zn(2+) is bound by residues His-60 and His-62. Substrate is bound by residues Glu-89 and His-179. His-206 contacts Zn(2+). Substrate-binding residues include Glu-209 and Asp-294. Asp-294 lines the Zn(2+) pocket.

It belongs to the metallo-dependent hydrolases superfamily. MTA/SAH deaminase family. Requires Zn(2+) as cofactor.

The enzyme catalyses S-adenosyl-L-homocysteine + H2O + H(+) = S-inosyl-L-homocysteine + NH4(+). It catalyses the reaction S-methyl-5'-thioadenosine + H2O + H(+) = S-methyl-5'-thioinosine + NH4(+). In terms of biological role, catalyzes the deamination of 5-methylthioadenosine and S-adenosyl-L-homocysteine into 5-methylthioinosine and S-inosyl-L-homocysteine, respectively. Is also able to deaminate adenosine. The polypeptide is 5-methylthioadenosine/S-adenosylhomocysteine deaminase (Dictyoglomus turgidum (strain DSM 6724 / Z-1310)).